A 218-amino-acid chain; its full sequence is Probable nicotinate-nucleotide adenylyltransferase (218 aa).

This sequence belongs to the NadD family.

The enzyme catalyses nicotinate beta-D-ribonucleotide + ATP + H(+) = deamido-NAD(+) + diphosphate. The protein operates within cofactor biosynthesis; NAD(+) biosynthesis; deamido-NAD(+) from nicotinate D-ribonucleotide: step 1/1. In terms of biological role, catalyzes the reversible adenylation of nicotinate mononucleotide (NaMN) to nicotinic acid adenine dinucleotide (NaAD). This Sodalis glossinidius (strain morsitans) protein is Probable nicotinate-nucleotide adenylyltransferase.